Here is a 1009-residue protein sequence, read N- to C-terminus: Type VII secretion system accessory factor EsaA (1009 aa).

A run of 6 helical transmembrane segments spans residues 7 to 27 (IYAL…IFFV), 822 to 842 (ISPT…AYIF), 869 to 889 (AITS…VGLI), 903 to 923 (KFIL…TYLL), 928 to 948 (SIGM…MNNL), and 979 to 999 (IGLA…LNMF).

It belongs to the EsaA family. In terms of assembly, homodimer. Interacts with EssB.

The protein localises to the cell membrane. Its function is as follows. Component of the type VII secretion system (Ess). Provides together with EssB and other components such as EssC and EssE a secretion platform across the cytoplasmic membrane in the host. This is Type VII secretion system accessory factor EsaA from Staphylococcus aureus (strain MRSA252).